We begin with the raw amino-acid sequence, 151 residues long: Probable cellulase Cel12b (151 aa).

Catalysis depends on residues E50 and E133.

Belongs to the glycosyl hydrolase 12 (cellulase H) family.

In terms of biological role, probable cellulase. Can hydrolyze barley beta-glucan in vitro. Could be important for the survival of M.tuberculosis in the environment, perhaps in amoebal hosts. This is Probable cellulase Cel12b from Mycobacterium tuberculosis (strain ATCC 25618 / H37Rv).